The chain runs to 810 residues: DNA ligase (810 aa).

NAD(+) contacts are provided by residues 46-50 (DAEYD), 95-96 (SL), and Glu-129. The active-site N6-AMP-lysine intermediate is the Lys-131. NAD(+) contacts are provided by Arg-152, Glu-189, Lys-305, and Lys-329. 4 residues coordinate Zn(2+): Cys-434, Cys-437, Cys-458, and Cys-464. Residues 528 to 548 (ERRAESGTAEPPKKAAKKKGD) form a disordered region. Positions 731–810 (AAASTFAGKT…DDWLAMVAQG (80 aa)) constitute a BRCT domain.

This sequence belongs to the NAD-dependent DNA ligase family. LigA subfamily. The cofactor is Mg(2+). Mn(2+) serves as cofactor.

The catalysed reaction is NAD(+) + (deoxyribonucleotide)n-3'-hydroxyl + 5'-phospho-(deoxyribonucleotide)m = (deoxyribonucleotide)n+m + AMP + beta-nicotinamide D-nucleotide.. Functionally, DNA ligase that catalyzes the formation of phosphodiester linkages between 5'-phosphoryl and 3'-hydroxyl groups in double-stranded DNA using NAD as a coenzyme and as the energy source for the reaction. It is essential for DNA replication and repair of damaged DNA. The protein is DNA ligase of Methylobacterium radiotolerans (strain ATCC 27329 / DSM 1819 / JCM 2831 / NBRC 15690 / NCIMB 10815 / 0-1).